The sequence spans 216 residues: Transmembrane emp24 domain-containing protein eca (216 aa).

A signal peptide spans 1-20 (MRDQFICLALLLCALHSACG). Topologically, residues 21 to 182 (LYFHISETER…FRHTSESTNS (162 aa)) are lumenal. Positions 30–126 (RKCFIEEVPD…QLRVHLDIQV (97 aa)) constitute a GOLD domain. A coiled-coil region spans residues 134–164 (ANVAQKEKLTELQLRIRQLLDQVEQITKEQN). The helical transmembrane segment at 183 to 203 (RVLWWSLAQTLVLVCMGFWQM) threads the bilayer. Over 204 to 216 (RHLKSFFEAKKLV) the chain is Cytoplasmic. The Prevents secretion from ER motif lies at 213–216 (KKLV).

The protein belongs to the EMP24/GP25L family.

The protein resides in the endoplasmic reticulum membrane. In terms of biological role, eca and bai are essential, though not redundant, for dorsoventral patterning of the embryo. Specifically required during early embryogenesis for the activity of maternal tkv, while the zygotic tkv is not affected. Involved in Golgi organization. The sequence is that of Transmembrane emp24 domain-containing protein eca from Drosophila pseudoobscura pseudoobscura (Fruit fly).